A 983-amino-acid chain; its full sequence is Ephrin type-A receptor 3 (983 aa).

Positions 1–20 are cleaved as a signal peptide; that stretch reads MDCHLSILVLLGCCVLSCSG. The Extracellular portion of the chain corresponds to 21–540; the sequence is ELSPQPSNEV…SFSISGENSH (520 aa). Residues 29 to 206 enclose the Eph LBD domain; sequence EVNLLDSKTI…YFKKCPFTVK (178 aa). N-linked (GlcNAc...) asparagine glycans are attached at residues N231, N336, N390, N403, and N492. 2 consecutive Fibronectin type-III domains span residues 324–434 and 435–530; these read PPSA…TNQA and APSP…TSPD. A helical transmembrane segment spans residues 541 to 564; it reads VVMIAISAAVAIIVLTVVTYVLVG. The Cytoplasmic segment spans residues 565–983; the sequence is RFCGYHKSKH…TQSKNGPVPV (419 aa). Phosphotyrosine; by autocatalysis occurs at positions 596 and 602. The Protein kinase domain occupies 621–882; it reads ISIDKVVGAG…QIVSILDKLI (262 aa). ATP-binding positions include 628–633, K653, and 700–706; these read GAGEFG and EYMENGS. A Phosphotyrosine; by autocatalysis modification is found at Y701. D746 (proton acceptor) is an active-site residue. Position 750–751 (750–751) interacts with ATP; that stretch reads RN. Phosphotyrosine; by autocatalysis is present on Y779. In terms of domain architecture, SAM spans 911–975; sequence ATFHTTGDWL…ISTIKALETQ (65 aa). Y937 is modified (phosphotyrosine). The PDZ-binding signature appears at 981–983; the sequence is VPV.

This sequence belongs to the protein kinase superfamily. Tyr protein kinase family. Ephrin receptor subfamily. In terms of assembly, heterotetramer upon binding of the ligand. The heterotetramer is composed of an ephrin dimer and a receptor dimer. Oligomerization is probably required to induce biological responses. Forms a ternary EFNA5-EPHA3-ADAM10 complex mediating EFNA5 extracellular domain shedding by ADAM10 which regulates the EFNA5-EPHA3 complex internalization and function. Interacts (phosphorylated) with PTPN1; dephosphorylates EPHA3 and may regulate its trafficking and function. Interacts (phosphorylated) with CRK; mediates EFNA5-EPHA3 signaling through RHOA GTPase activation. Interacts with NCK1 (via SH2 domain); mediates EFNA5-EPHA3 signaling. Post-translationally, autophosphorylates upon activation by EFNA5. Phosphorylation on Tyr-602 mediates interaction with NCK1. Dephosphorylated by PTPN1. In terms of tissue distribution, greatest levels of expression occurring in the brain, also detected in testis. Expressed in myogenic progenitor cells.

The protein resides in the cell membrane. It localises to the secreted. It catalyses the reaction L-tyrosyl-[protein] + ATP = O-phospho-L-tyrosyl-[protein] + ADP + H(+). Its function is as follows. Receptor tyrosine kinase which binds promiscuously membrane-bound ephrin family ligands residing on adjacent cells, leading to contact-dependent bidirectional signaling into neighboring cells. The signaling pathway downstream of the receptor is referred to as forward signaling while the signaling pathway downstream of the ephrin ligand is referred to as reverse signaling. Highly promiscuous for ephrin-A ligands it binds preferentially EFNA5. Upon activation by EFNA5 regulates cell-cell adhesion, cytoskeletal organization and cell migration. Plays a role in cardiac cells migration and differentiation and regulates the formation of the atrioventricular canal and septum during development probably through activation by EFNA1. Involved in the retinotectal mapping of neurons. May also control the segregation but not the guidance of motor and sensory axons during neuromuscular circuit development. The sequence is that of Ephrin type-A receptor 3 (Epha3) from Mus musculus (Mouse).